Here is a 454-residue protein sequence, read N- to C-terminus: MLPDWACHVEDIMIIEHSAEVRGKTPLYRHLYVQVLAAIAAGILLGHFYPDIGTQLKPLGDAFIRLVKMIIAPVIFLTVATGIAGMTDLAKVGRVAGKAMIYFLAFSTLALLVGLVVANLVQPGAGMHIDPASLDAKAVATYAQKAHEQSITGFLMNIIPTTLVGAFAEGDILQVLFISVLFGISLAIVGKKAEPVVDFLQALTLPIFRLVAILMKAAPIGAFGAMAFTIGKYGIASIANLAMLIGTFYLTSFLFVFVVLGAVARYNGFSILSLVRYIKEELLLVLGTSSSEAALPGLMNKMEKAGCKRSVVGLVIPTGYSFNLDGTNIYMTLAALFIAQATDTPLSYGDQILLLLVAMLSSKGAAGITGAGFITLAATLSVVPSVPVAGMALILGIDRFMSECRALTNFVGNAVATIVVAKWEGELDQAQLSAALGGEMQVETIPAVVVQPAE.

9 consecutive transmembrane segments (helical) span residues 33-53 (VQVL…PDIG), 66-86 (LVKM…IAGM), 101-121 (IYFL…ANLV), 148-168 (EQSI…GAFA), 170-190 (GDIL…AIVG), 210-230 (LVAI…AFTI), 243-263 (MLIG…LGAV), 354-374 (LLLV…AGFI), and 377-397 (AATL…ILGI).

Belongs to the dicarboxylate/amino acid:cation symporter (DAACS) (TC 2.A.23) family.

It is found in the cell inner membrane. Responsible for the transport of dicarboxylates such as succinate, fumarate, and malate from the periplasm across the membrane. This Sinorhizobium medicae (strain WSM419) (Ensifer medicae) protein is C4-dicarboxylate transport protein.